The primary structure comprises 827 residues: Periplasmic nitrate reductase (827 aa).

Positions 1–34 form a signal peptide, tat-type signal; sequence MSLTRRDFIKANAVAATAAAAGIATPAIAQPAKA. Residues 36–92 form the 4Fe-4S Mo/W bis-MGD-type domain; it reads IRWDKGVCRFCGTGCAVLVGVQDGRVVATQGDPDSPVNRGLNCIKGYFLSKIMYGED. [4Fe-4S] cluster-binding residues include Cys-43, Cys-46, Cys-50, and Cys-78. Residues Lys-80, Gln-148, Asn-173, Cys-177, 210–217, 241–245, 260–262, Met-371, Gln-375, Asn-481, 507–508, Lys-530, Asp-557, and 717–726 each bind Mo-bis(molybdopterin guanine dinucleotide); these read WGSNMAEM, STFEH, QTD, SD, and TGRVLEHWHS. Residue Phe-793 coordinates substrate. Positions 801 and 818 each coordinate Mo-bis(molybdopterin guanine dinucleotide).

Belongs to the prokaryotic molybdopterin-containing oxidoreductase family. NasA/NapA/NarB subfamily. Component of the periplasmic nitrate reductase NapAB complex composed of NapA and NapB. It depends on [4Fe-4S] cluster as a cofactor. Mo-bis(molybdopterin guanine dinucleotide) serves as cofactor. Predicted to be exported by the Tat system. The position of the signal peptide cleavage has not been experimentally proven.

The protein localises to the periplasm. The enzyme catalyses 2 Fe(II)-[cytochrome] + nitrate + 2 H(+) = 2 Fe(III)-[cytochrome] + nitrite + H2O. In terms of biological role, catalytic subunit of the periplasmic nitrate reductase complex NapAB. Receives electrons from NapB and catalyzes the reduction of nitrate to nitrite. In Paramagnetospirillum magneticum (strain ATCC 700264 / AMB-1) (Magnetospirillum magneticum), this protein is Periplasmic nitrate reductase.